We begin with the raw amino-acid sequence, 433 residues long: MPDYLGADQRKTKEDEKDDKPIRALDEGDIALLKTYGQSTYSRQIKQVEDDIQQLLKKINELTGIKESDTGLAPPALWDLAADKQTLQSEQPLQVARCTKIINADSEDPKYIINVKQFAKFVVDLSDQVAPTDIEEGMRVGVDRNKYQIHIPLPPKIDPTVTMMQVEEKPDVTYSDVGGCKEQIEKLREVVETPLLHPERFVNLGIEPPKGVLLFGPPGTGKTLCARAVANRTDACFIRVIGSELVQKYVGEGARMVRELFEMARTKKACLIFFDEIDAIGGARFDDGAGGDNEVQRTMLELINQLDGFDPRGNIKVLMATNRPDTLDPALMRPGRLDRKIEFSLPDLEGRTHIFKIHARSMSVERDIRFELLARLCPNSTGAEIRSVCTEAGMFAIRARRKIATEKDFLEAVNKVIKSYAKFSATPRYMTYN.

The segment at 1–22 (MPDYLGADQRKTKEDEKDDKPI) is disordered. Positions 8–22 (DQRKTKEDEKDDKPI) are enriched in basic and acidic residues. Position 116 is an N6-acetyllysine (Lys-116). 216-223 (GPPGTGKT) contributes to the ATP binding site. Position 422 is an N6-acetyllysine (Lys-422).

Belongs to the AAA ATPase family. As to quaternary structure, component of the 19S proteasome regulatory particle complex. The 26S proteasome consists of a 20S core particle (CP) and two 19S regulatory subunits (RP). The regulatory particle is made of a lid composed of 9 subunits, a base containing 6 ATPases including PSMC2 and few additional components. Interacts with NDC80/HEC; this interaction is detected only during M phase. Interacts and SQSTM1. Interacts with PAAF1. Directly interacts with TRIM5. Post-translationally, monoubiquitinated by RNF181. Phosphorylated. Dephosphorylated by UBLCP1 which impairs PSMC2 ATPase activity and disrupts 26S proteasome assembly.

It localises to the cytoplasm. The protein localises to the nucleus. Its function is as follows. Component of the 26S proteasome, a multiprotein complex involved in the ATP-dependent degradation of ubiquitinated proteins. This complex plays a key role in the maintenance of protein homeostasis by removing misfolded or damaged proteins, which could impair cellular functions, and by removing proteins whose functions are no longer required. Therefore, the proteasome participates in numerous cellular processes, including cell cycle progression, apoptosis, or DNA damage repair. PSMC2 belongs to the heterohexameric ring of AAA (ATPases associated with diverse cellular activities) proteins that unfolds ubiquitinated target proteins that are concurrently translocated into a proteolytic chamber and degraded into peptides. The sequence is that of 26S proteasome regulatory subunit 7 (PSMC2) from Bos taurus (Bovine).